The primary structure comprises 264 residues: Hydroxyethylthiazole kinase (264 aa).

Residue Met-55 coordinates substrate. Residues Arg-130 and Ser-176 each contribute to the ATP site. Residue Gly-203 participates in substrate binding.

It belongs to the Thz kinase family. Requires Mg(2+) as cofactor.

It catalyses the reaction 5-(2-hydroxyethyl)-4-methylthiazole + ATP = 4-methyl-5-(2-phosphooxyethyl)-thiazole + ADP + H(+). Its pathway is cofactor biosynthesis; thiamine diphosphate biosynthesis; 4-methyl-5-(2-phosphoethyl)-thiazole from 5-(2-hydroxyethyl)-4-methylthiazole: step 1/1. Catalyzes the phosphorylation of the hydroxyl group of 4-methyl-5-beta-hydroxyethylthiazole (THZ). The protein is Hydroxyethylthiazole kinase of Leptospira borgpetersenii serovar Hardjo-bovis (strain JB197).